The sequence spans 178 residues: Large ribosomal subunit protein uL6 (178 aa).

It belongs to the universal ribosomal protein uL6 family. In terms of assembly, part of the 50S ribosomal subunit.

Its function is as follows. This protein binds to the 23S rRNA, and is important in its secondary structure. It is located near the subunit interface in the base of the L7/L12 stalk, and near the tRNA binding site of the peptidyltransferase center. The chain is Large ribosomal subunit protein uL6 from Geobacillus kaustophilus (strain HTA426).